The primary structure comprises 364 residues: tRNA 2-selenouridine synthase (364 aa).

Positions 14–137 (LIADTPIIDV…LRQTAIQATI (124 aa)) constitute a Rhodanese domain. The active-site S-selanylcysteine intermediate is cysteine 97.

Belongs to the SelU family. As to quaternary structure, monomer.

The catalysed reaction is 5-methylaminomethyl-2-thiouridine(34) in tRNA + selenophosphate + (2E)-geranyl diphosphate + H2O + H(+) = 5-methylaminomethyl-2-selenouridine(34) in tRNA + (2E)-thiogeraniol + phosphate + diphosphate. It catalyses the reaction 5-methylaminomethyl-2-thiouridine(34) in tRNA + (2E)-geranyl diphosphate = 5-methylaminomethyl-S-(2E)-geranyl-thiouridine(34) in tRNA + diphosphate. The enzyme catalyses 5-methylaminomethyl-S-(2E)-geranyl-thiouridine(34) in tRNA + selenophosphate + H(+) = 5-methylaminomethyl-2-(Se-phospho)selenouridine(34) in tRNA + (2E)-thiogeraniol. It carries out the reaction 5-methylaminomethyl-2-(Se-phospho)selenouridine(34) in tRNA + H2O = 5-methylaminomethyl-2-selenouridine(34) in tRNA + phosphate. Involved in the post-transcriptional modification of the uridine at the wobble position (U34) of tRNA(Lys), tRNA(Glu) and tRNA(Gln). Catalyzes the conversion of 2-thiouridine (S2U-RNA) to 2-selenouridine (Se2U-RNA). Acts in a two-step process involving geranylation of 2-thiouridine (S2U) to S-geranyl-2-thiouridine (geS2U) and subsequent selenation of the latter derivative to 2-selenouridine (Se2U) in the tRNA chain. The polypeptide is tRNA 2-selenouridine synthase (Escherichia coli (strain ATCC 8739 / DSM 1576 / NBRC 3972 / NCIMB 8545 / WDCM 00012 / Crooks)).